The primary structure comprises 414 residues: L-cysteine:1D-myo-inositol 2-amino-2-deoxy-alpha-D-glucopyranoside ligase (414 aa).

The segment at 1-38 (MRSWPAPEVPNLPEAGLPGPALPLHLHDTATGTVRPTR) is disordered. The span at 11–38 (NLPEAGLPGPALPLHLHDTATGTVRPTR) shows a compositional bias: low complexity. Residue Cys-48 participates in Zn(2+) binding. L-cysteinyl-5'-AMP is bound by residues 48 to 51 (CGIT), Thr-63, and 86 to 88 (NVT). Positions 50-60 (ITPYDATHLGH) match the 'HIGH' region motif. Residues 188 to 193 (ERGGDP) carry the 'ERGGDP' region motif. Trp-228 lines the L-cysteinyl-5'-AMP pocket. Zn(2+) is bound at residue Cys-232. 250–252 (GSD) is an L-cysteinyl-5'-AMP binding site. Zn(2+) is bound at residue His-257. Val-284 serves as a coordination point for L-cysteinyl-5'-AMP. The 'KMSKS' region motif lies at 290-294 (KMSKS).

It belongs to the class-I aminoacyl-tRNA synthetase family. MshC subfamily. In terms of assembly, monomer. It depends on Zn(2+) as a cofactor.

The enzyme catalyses 1D-myo-inositol 2-amino-2-deoxy-alpha-D-glucopyranoside + L-cysteine + ATP = 1D-myo-inositol 2-(L-cysteinylamino)-2-deoxy-alpha-D-glucopyranoside + AMP + diphosphate + H(+). Functionally, catalyzes the ATP-dependent condensation of GlcN-Ins and L-cysteine to form L-Cys-GlcN-Ins. This is L-cysteine:1D-myo-inositol 2-amino-2-deoxy-alpha-D-glucopyranoside ligase from Thermomonospora curvata (strain ATCC 19995 / DSM 43183 / JCM 3096 / KCTC 9072 / NBRC 15933 / NCIMB 10081 / Henssen B9).